We begin with the raw amino-acid sequence, 37 residues long: MSDIN-like toxin proprotein 5 (37 aa).

Positions 1–10 (MSDINATRLP) are excised as a propeptide. The segment at residues 11–20 (LFFPPDFRPP) is a cross-link (cyclopeptide (Leu-Pro)). Positions 21 to 37 (CVGDADNFTLTRGENLC) are excised as a propeptide.

The protein belongs to the MSDIN fungal toxin family. In terms of processing, processed by the macrocyclase-peptidase enzyme POPB to yield a toxic cyclic decapeptide. POPB first removes 10 residues from the N-terminus. Conformational trapping of the remaining peptide forces the enzyme to release this intermediate rather than proceed to macrocyclization. The enzyme rebinds the remaining peptide in a different conformation and catalyzes macrocyclization of the N-terminal 10 residues. As to expression, expressed in basidiocarps.

Probable toxin that belongs to the MSDIN-like toxin family responsible for a large number of food poisoning cases and deaths. The chain is MSDIN-like toxin proprotein 5 from Amanita exitialis (Guangzhou destroying angel).